Reading from the N-terminus, the 260-residue chain is MIVKTRAVVLRDIKYRDQSKICLLLTREYGQVSVILKGGRSAKSKTGMLFSPGNLIDAVLYKKGNRDLQLASDASLVKSPLSETPDLERFSVLYRVLDLVRYASGPEEKNVPLFTLVAATIERLCDTERDFQPILAGFLLRLVSVLGFTPALKRCVFSNYDLLGSIEEMQLDELLFVHDPGGFALPGSAVPMGATIQRVPVSHYLFIRALAATGSQAACPEASPEEVSAVTALLQEYCACHLGRMPHRKHLDIVSRLISA.

This sequence belongs to the RecO family.

Its function is as follows. Involved in DNA repair and RecF pathway recombination. This chain is DNA repair protein RecO, found in Chlorobaculum parvum (strain DSM 263 / NCIMB 8327) (Chlorobium vibrioforme subsp. thiosulfatophilum).